The sequence spans 300 residues: MGPYLSQPKKDKTTTTGQGKSVIFAASEMQGWRNTMEDAHIHKPDVIQDVSIFGVFDGHGGREVAQFVEKHFIDELLKNKNFKEQKFEEALKETFLKMDELLVTPEGQKELNQYKATDTDESYAGCTANVALIYKNTLYVANAGDSRTVLCRNNANYDMSVDHKPDNPEEKSRIERAGGFVSDGRVNGNLNLSRALGDLEYKRDSKLRVNEQLIIAIPDVKKVELGPQDKFLLLGCDGVFETLNHMDLLKQVNSTLGQAQVTEELLRKAAEDLLDQLLAPDTSQGTGCDNMTTILVYLKK.

Residues 23 to 298 (IFAASEMQGW…DNMTTILVYL (276 aa)) enclose the PPM-type phosphatase domain. Residues Asp-57, Gly-58, Asp-237, and Asp-289 each contribute to the Mn(2+) site.

The protein belongs to the PP2C family. The cofactor is Mg(2+). Mn(2+) is required as a cofactor.

The protein localises to the membrane. The catalysed reaction is O-phospho-L-seryl-[protein] + H2O = L-seryl-[protein] + phosphate. It carries out the reaction O-phospho-L-threonyl-[protein] + H2O = L-threonyl-[protein] + phosphate. In terms of biological role, enzyme with a broad specificity. The chain is Probable protein phosphatase 2C 2 from Paramecium tetraurelia.